Reading from the N-terminus, the 181-residue chain is Sodium/potassium-transporting ATPase subunit beta-1-interacting protein 3 (181 aa).

A run of 4 helical transmembrane segments spans residues Gly2–Leu22, Ala35–Ile55, Ile62–Phe82, and Val152–Met172.

It belongs to the NKAIN family. In terms of assembly, interacts with ATP1B1. Detected in the brain only and specifically in neurons. Expressed in multiple regions such as cerebral cortex, thalamus, hippocampus, olfactory bulb and brainstem as well as in cerebellum with low expression in granular cell layer.

It localises to the cell membrane. The sequence is that of Sodium/potassium-transporting ATPase subunit beta-1-interacting protein 3 (Nkain3) from Mus musculus (Mouse).